A 682-amino-acid polypeptide reads, in one-letter code: Protein PilJ (682 aa).

Topologically, residues 1 to 14 are cytoplasmic; that stretch reads MKKINAGNLFAGMR. The chain crosses the membrane as a helical span at residues 15-38; sequence SSSVIAGLFIVLIVSIVLLFANFA. Residues 39 to 306 are Periplasmic-facing; that stretch reads YLNTQSNHDK…DGFENLAGGR (268 aa). Residues 307 to 333 traverse the membrane as a helical segment; that stretch reads SINLFAGYALGALALASIILIGLVMVR. The Cytoplasmic portion of the chain corresponds to 334-682; that stretch reads ETNRRLAETA…FKLPEGVEQA (349 aa). Positions 347–398 constitute an HAMP domain; it reads DRNQAAILRLLDEIADLADGDLTVAATVTEDFTGAIADSINYSIDQLRELVE. In terms of domain architecture, Methyl-accepting transducer spans 403–639; sequence TAVQVAAAAQ…HISNTMNVIQ (237 aa).

Belongs to the methyl-accepting chemotaxis (MCP) protein family.

It localises to the cell inner membrane. Functionally, may be a part of a signal-transduction system that regulates twitching motility by controlling pilus function (extension and retraction). The chain is Protein PilJ (pilJ) from Pseudomonas aeruginosa (strain ATCC 15692 / DSM 22644 / CIP 104116 / JCM 14847 / LMG 12228 / 1C / PRS 101 / PAO1).